The chain runs to 289 residues: Probable branched-chain-amino-acid aminotransferase (289 aa).

An N6-(pyridoxal phosphate)lysine modification is found at K154.

It belongs to the class-IV pyridoxal-phosphate-dependent aminotransferase family. Requires pyridoxal 5'-phosphate as cofactor.

It catalyses the reaction L-leucine + 2-oxoglutarate = 4-methyl-2-oxopentanoate + L-glutamate. The enzyme catalyses L-isoleucine + 2-oxoglutarate = (S)-3-methyl-2-oxopentanoate + L-glutamate. It carries out the reaction L-valine + 2-oxoglutarate = 3-methyl-2-oxobutanoate + L-glutamate. It participates in amino-acid biosynthesis; L-isoleucine biosynthesis; L-isoleucine from 2-oxobutanoate: step 4/4. Its pathway is amino-acid biosynthesis; L-leucine biosynthesis; L-leucine from 3-methyl-2-oxobutanoate: step 4/4. The protein operates within amino-acid biosynthesis; L-valine biosynthesis; L-valine from pyruvate: step 4/4. Acts on leucine, isoleucine and valine. This chain is Probable branched-chain-amino-acid aminotransferase (ilvE), found in Rickettsia bellii (strain RML369-C).